The sequence spans 81 residues: Serine protease inhibitor Kazal-type 2 (81 aa).

The signal sequence occupies residues 1–21 (MALAVLRLALLLLAVTFAGPL). A Kazal-like domain is found at 27-81 (KYKTPFCARYQLPGCPRDFNPVCGTDMITYPNECTLCMKIRESGQNIKILRRGPC). Cystine bridges form between cysteine 33–cysteine 63, cysteine 41–cysteine 60, and cysteine 49–cysteine 81.

In terms of tissue distribution, more abundant in epididymis than in testis.

Its subcellular location is the secreted. It is found in the cytoplasmic vesicle. The protein localises to the secretory vesicle. It localises to the acrosome. Strong inhibitor of acrosin in male and/or female genital tract. Also inhibits trypsin. Its function is as follows. As a strong inhibitor of acrosin, it is required for normal spermiogenesis. It probably hinders premature activation of proacrosin and other proteases, thus preventing the cascade of events leading to spermiogenesis defects. May be involved in the regulation of serine protease-dependent germ cell apoptosis. It also inhibits trypsin. The sequence is that of Serine protease inhibitor Kazal-type 2 (SPINK2) from Macaca fascicularis (Crab-eating macaque).